Consider the following 189-residue polypeptide: ATP synthase subunit delta (189 aa).

It belongs to the ATPase delta chain family. In terms of assembly, F-type ATPases have 2 components, F(1) - the catalytic core - and F(0) - the membrane proton channel. F(1) has five subunits: alpha(3), beta(3), gamma(1), delta(1), epsilon(1). F(0) has three main subunits: a(1), b(2) and c(10-14). The alpha and beta chains form an alternating ring which encloses part of the gamma chain. F(1) is attached to F(0) by a central stalk formed by the gamma and epsilon chains, while a peripheral stalk is formed by the delta and b chains.

The protein localises to the cell inner membrane. In terms of biological role, f(1)F(0) ATP synthase produces ATP from ADP in the presence of a proton or sodium gradient. F-type ATPases consist of two structural domains, F(1) containing the extramembraneous catalytic core and F(0) containing the membrane proton channel, linked together by a central stalk and a peripheral stalk. During catalysis, ATP synthesis in the catalytic domain of F(1) is coupled via a rotary mechanism of the central stalk subunits to proton translocation. This protein is part of the stalk that links CF(0) to CF(1). It either transmits conformational changes from CF(0) to CF(1) or is implicated in proton conduction. The polypeptide is ATP synthase subunit delta (Methylorubrum extorquens (strain PA1) (Methylobacterium extorquens)).